Reading from the N-terminus, the 397-residue chain is Glutamyl-tRNA reductase (397 aa).

Substrate-binding positions include 47–50 (TCGR), Ser-98, 103–105 (ETD), and Gln-109. Cys-48 acts as the Nucleophile in catalysis. 177–182 (GAGAVG) contacts NADP(+).

The protein belongs to the glutamyl-tRNA reductase family. As to quaternary structure, homodimer.

The catalysed reaction is (S)-4-amino-5-oxopentanoate + tRNA(Glu) + NADP(+) = L-glutamyl-tRNA(Glu) + NADPH + H(+). It functions in the pathway porphyrin-containing compound metabolism; protoporphyrin-IX biosynthesis; 5-aminolevulinate from L-glutamyl-tRNA(Glu): step 1/2. In terms of biological role, catalyzes the NADPH-dependent reduction of glutamyl-tRNA(Glu) to glutamate 1-semialdehyde (GSA). The sequence is that of Glutamyl-tRNA reductase from Pyrobaculum aerophilum (strain ATCC 51768 / DSM 7523 / JCM 9630 / CIP 104966 / NBRC 100827 / IM2).